We begin with the raw amino-acid sequence, 152 residues long: Small ribosomal subunit protein uS11A (152 aa).

The interval 131 to 152 (EDVTPIPSDSTRRKGGRRGRRL) is disordered. Positions 143 to 152 (RKGGRRGRRL) are enriched in basic residues.

The protein belongs to the universal ribosomal protein uS11 family.

The sequence is that of Small ribosomal subunit protein uS11A from Anopheles gambiae (African malaria mosquito).